The sequence spans 142 residues: Large ribosomal subunit protein uL11 (142 aa).

Belongs to the universal ribosomal protein uL11 family. As to quaternary structure, part of the ribosomal stalk of the 50S ribosomal subunit. Interacts with L10 and the large rRNA to form the base of the stalk. L10 forms an elongated spine to which L12 dimers bind in a sequential fashion forming a multimeric L10(L12)X complex. One or more lysine residues are methylated.

In terms of biological role, forms part of the ribosomal stalk which helps the ribosome interact with GTP-bound translation factors. The protein is Large ribosomal subunit protein uL11 of Afipia carboxidovorans (strain ATCC 49405 / DSM 1227 / KCTC 32145 / OM5) (Oligotropha carboxidovorans).